A 976-amino-acid polypeptide reads, in one-letter code: Leucine--tRNA ligase (976 aa).

The span at 1–23 (MTESPTTTPGSTSGAPSGVPSGV) shows a compositional bias: low complexity. The tract at residues 1-34 (MTESPTTTPGSTSGAPSGVPSGVNDAESDAPRHR) is disordered. The 'HIGH' region motif lies at 86-97 (PYPSGEGLHVGH). The 'KMSKS' region motif lies at 745 to 749 (KIGKS). An ATP-binding site is contributed by Lys-748.

The protein belongs to the class-I aminoacyl-tRNA synthetase family.

It localises to the cytoplasm. It carries out the reaction tRNA(Leu) + L-leucine + ATP = L-leucyl-tRNA(Leu) + AMP + diphosphate. The chain is Leucine--tRNA ligase from Mycobacterium marinum (strain ATCC BAA-535 / M).